Reading from the N-terminus, the 376-residue chain is uncharacterized protein (376 aa).

Belongs to the mimivirus R1 family.

This is an uncharacterized protein from Acanthamoeba polyphaga (Amoeba).